The following is a 124-amino-acid chain: Small ribosomal subunit protein uS13 (124 aa).

Positions 95–124 are disordered; the sequence is GLPVRGQRTKTNARTRKGPKRTIAGKKKAK.

This sequence belongs to the universal ribosomal protein uS13 family. Part of the 30S ribosomal subunit. Forms a loose heterodimer with protein S19. Forms two bridges to the 50S subunit in the 70S ribosome.

Located at the top of the head of the 30S subunit, it contacts several helices of the 16S rRNA. In the 70S ribosome it contacts the 23S rRNA (bridge B1a) and protein L5 of the 50S subunit (bridge B1b), connecting the 2 subunits; these bridges are implicated in subunit movement. Contacts the tRNAs in the A and P-sites. The sequence is that of Small ribosomal subunit protein uS13 from Rhodococcus jostii (strain RHA1).